The chain runs to 293 residues: Elongation factor Ts (293 aa).

Residues 79-82 (TDFV) are involved in Mg(2+) ion dislocation from EF-Tu.

This sequence belongs to the EF-Ts family.

It localises to the cytoplasm. Functionally, associates with the EF-Tu.GDP complex and induces the exchange of GDP to GTP. It remains bound to the aminoacyl-tRNA.EF-Tu.GTP complex up to the GTP hydrolysis stage on the ribosome. This Bacillus licheniformis (strain ATCC 14580 / DSM 13 / JCM 2505 / CCUG 7422 / NBRC 12200 / NCIMB 9375 / NCTC 10341 / NRRL NRS-1264 / Gibson 46) protein is Elongation factor Ts.